The following is a 3068-amino-acid chain: Highly reducing polyketide synthase 17 (3068 aa).

The Ketosynthase family 3 (KS3) domain occupies 100-526 (IEPIAIVGAS…GTNAHAIMER (427 aa)). Active-site for beta-ketoacyl synthase activity residues include Cys-274, His-410, and His-449. A malonyl-CoA:ACP transacylase (MAT) domain region spans residues 627 to 938 (YVFTGQGAQW…LAGPIRQCLA (312 aa)). Ser-721 functions as the For malonyltransferase activity in the catalytic mechanism. The interval 1027 to 1160 (HHLLGVRMTE…GVVEGVMTLD (134 aa)) is N-terminal hotdog fold. The interval 1027–1311 (HHLLGVRMTE…RASNIDMTIV (285 aa)) is dehydratase (DH) domain. One can recognise a PKS/mFAS DH domain in the interval 1027 to 1334 (HHLLGVRMTE…SRSLAAHVDG (308 aa)). Residue His-1059 is the Proton acceptor; for dehydratase activity of the active site. The segment at 1179 to 1334 (NRTMVIPEEL…SRSLAAHVDG (156 aa)) is C-terminal hotdog fold. The active-site Proton donor; for dehydratase activity is Asp-1247. The enoylreductase (ER) domain stretch occupies residues 1735-2037 (LGPVQSSKGD…LVRQGGKVIL (303 aa)). A catalytic ketoreductase (KR) domain region spans residues 2062 to 2240 (AAYVVAGGMG…FLSMNIGWIE (179 aa)). The Carrier domain occupies 2345 to 2423 (TIIDFISSAI…DLAEKVASRS (79 aa)). O-(pantetheine 4'-phosphoryl)serine is present on Ser-2383. Residues 2831-3062 (FDVASLGLRS…SCMITSLLED (232 aa)) are choline/carnitine acyltransferase (cAT) domain.

The protein operates within secondary metabolite biosynthesis. Its function is as follows. Highly reducing polyketide synthase; part of the gene cluster that mediates the biosynthesis of (2Z,4E,6E,10E)-9-hydroxydodeca-2,4,6,10-tetraenoic acid (BAA), (2E,4E,6E,10E)-9-hydroxydodeca-2,4,6,10-tetraenoic acid (BAB), and (2Z,4E,6E)-octa-2,4,6-trienedioic acid (PBA). The highly reducing polyketide synthase Ba17a is sufficent to produce PBA and BAA. The still to be characterized protein Ba17b leads to an increased production of BAA as well as to the production of the new compound BAB. BAA does not possess insecticidal activity against G.mellonella larvae, however, both BAA and BAB increase the growth of Candida albicans and BAA can mitigate the fungicidal effects of fluconazole over C.albicans, suggesting that generalist pathogens such as M.anisopliae, can potentially manipulate the yeast microbiota found in arthropods (and anywhere else) by the activity of compounds as BAA and BAB. This is Highly reducing polyketide synthase 17 from Metarhizium anisopliae (Entomophthora anisopliae).